The chain runs to 447 residues: Elongation factor 1-alpha (447 aa).

A tr-type G domain is found at 5-230 (KVHINIVVIG…DNINEPKRPS (226 aa)). Residues 14-21 (GHVDSGKS) form a G1 region. 14–21 (GHVDSGKS) lines the GTP pocket. K55 carries the post-translational modification N6,N6-dimethyllysine. Residues 70 to 74 (GITID) form a G2 region. K79 carries the post-translational modification N6,N6,N6-trimethyllysine. The segment at 91–94 (DAPG) is G3. Residues 91–95 (DAPGH) and 153–156 (NKMD) each bind GTP. Residues 153-156 (NKMD) form a G4 region. N6,N6,N6-trimethyllysine is present on K187. The G5 stretch occupies residues 194–196 (SGF). K261 is modified (N6-methyllysine). 5-glutamyl glycerylphosphorylethanolamine is present on E289. At K306 the chain carries N6,N6,N6-trimethyllysine. A 5-glutamyl glycerylphosphorylethanolamine modification is found at E362. K396 carries the N6,N6,N6-trimethyllysine modification.

This sequence belongs to the TRAFAC class translation factor GTPase superfamily. Classic translation factor GTPase family. EF-Tu/EF-1A subfamily.

It localises to the cytoplasm. Its function is as follows. This protein promotes the GTP-dependent binding of aminoacyl-tRNA to the A-site of ribosomes during protein biosynthesis. The polypeptide is Elongation factor 1-alpha (Pisum sativum (Garden pea)).